The following is a 354-amino-acid chain: Protein PHLOEM PROTEIN 2-LIKE A8 (354 aa).

The region spanning 12-179 is the TIR domain; sequence TGPQVFINFR…EMILEIQKAL (168 aa). E86 is a catalytic residue.

It catalyses the reaction NAD(+) + H2O = ADP-D-ribose + nicotinamide + H(+). This Arabidopsis thaliana (Mouse-ear cress) protein is Protein PHLOEM PROTEIN 2-LIKE A8 (PP2A8).